A 307-amino-acid polypeptide reads, in one-letter code: Ornithine carbamoyltransferase (307 aa).

Carbamoyl phosphate-binding positions include 53 to 56 (STRT), Q80, R104, and 131 to 134 (HPCQ). L-ornithine contacts are provided by residues N162, D220, and 224–225 (SM). Residues 260-261 (CL) and R288 each bind carbamoyl phosphate.

The protein belongs to the aspartate/ornithine carbamoyltransferase superfamily. OTCase family.

Its subcellular location is the cytoplasm. It catalyses the reaction carbamoyl phosphate + L-ornithine = L-citrulline + phosphate + H(+). It participates in amino-acid biosynthesis; L-arginine biosynthesis; L-arginine from L-ornithine and carbamoyl phosphate: step 1/3. Reversibly catalyzes the transfer of the carbamoyl group from carbamoyl phosphate (CP) to the N(epsilon) atom of ornithine (ORN) to produce L-citrulline. The polypeptide is Ornithine carbamoyltransferase (Nitrosomonas europaea (strain ATCC 19718 / CIP 103999 / KCTC 2705 / NBRC 14298)).